We begin with the raw amino-acid sequence, 469 residues long: Proline--tRNA ligase (469 aa).

It belongs to the class-II aminoacyl-tRNA synthetase family. ProS type 3 subfamily. As to quaternary structure, homodimer.

It localises to the cytoplasm. The enzyme catalyses tRNA(Pro) + L-proline + ATP = L-prolyl-tRNA(Pro) + AMP + diphosphate. Catalyzes the attachment of proline to tRNA(Pro) in a two-step reaction: proline is first activated by ATP to form Pro-AMP and then transferred to the acceptor end of tRNA(Pro). The chain is Proline--tRNA ligase from Methanobrevibacter smithii (strain ATCC 35061 / DSM 861 / OCM 144 / PS).